The sequence spans 104 residues: MAAKIRRDDEVIVLAGKDKGKRGKVLSVVTESGRLFVEGINLIKKHQKPVPQLNQPGGIVEKEASIDVSNVAIYNSETSKADRVGFKIEDGKKLRIFKSTGKTI.

The protein belongs to the universal ribosomal protein uL24 family. Part of the 50S ribosomal subunit.

In terms of biological role, one of two assembly initiator proteins, it binds directly to the 5'-end of the 23S rRNA, where it nucleates assembly of the 50S subunit. Its function is as follows. One of the proteins that surrounds the polypeptide exit tunnel on the outside of the subunit. The protein is Large ribosomal subunit protein uL24 of Pseudoalteromonas translucida (strain TAC 125).